The chain runs to 512 residues: Lysine--tRNA ligase (512 aa).

Mg(2+)-binding residues include Glu-422 and Glu-429.

Belongs to the class-II aminoacyl-tRNA synthetase family. Homodimer. Mg(2+) is required as a cofactor.

It localises to the cytoplasm. It carries out the reaction tRNA(Lys) + L-lysine + ATP = L-lysyl-tRNA(Lys) + AMP + diphosphate. The protein is Lysine--tRNA ligase of Paraburkholderia phymatum (strain DSM 17167 / CIP 108236 / LMG 21445 / STM815) (Burkholderia phymatum).